A 91-amino-acid chain; its full sequence is uncharacterized protein (91 aa).

The N-terminal stretch at 1-18 is a signal peptide; the sequence is MKVNLILFSLFLLVSIMA. Residue C19 is the site of N-palmitoyl cysteine attachment. A lipid anchor (S-diacylglycerol cysteine) is attached at C19.

Its subcellular location is the cell membrane. This is an uncharacterized protein from Escherichia coli (strain K12).